The following is a 205-amino-acid chain: Glycerol-3-phosphate acyltransferase (205 aa).

The Periplasmic segment spans residues 1-3; the sequence is MSA. A helical transmembrane segment spans residues 4–24; the sequence is IAPGMILIAYLCGSISSAILV. At 25–52 the chain is on the cytoplasmic side; it reads CRLCGLPDPRTSGSGNPGATNVLRIGGK. The chain crosses the membrane as a helical span at residues 53–73; sequence GAAVAVLIFDVLKGMLPVWGA. Topologically, residues 74 to 80 are periplasmic; sequence YELGVSP. Residues 81–101 traverse the membrane as a helical segment; the sequence is FWLGLIAIAACLGHIWPVFFG. The Cytoplasmic portion of the chain corresponds to 102–111; that stretch reads FKGGKGVATA. The helical transmembrane segment at 112 to 132 threads the bilayer; it reads FGAIAPIGWDLTGVMAGTWLL. The Periplasmic portion of the chain corresponds to 133–137; that stretch reads TVLLS. A helical membrane pass occupies residues 138–158; it reads GYSSLGAIVSALIAPFYVWWF. Over 159–205 the chain is Cytoplasmic; the sequence is KPQFTFPVSMLSCLILLRHHDNIQRLWRRQETKIWTKFKRKREKDPE.

It belongs to the PlsY family. As to quaternary structure, probably interacts with PlsX.

It is found in the cell inner membrane. It carries out the reaction sn-glycerol 3-phosphate + an acyl-CoA = a 1-acyl-sn-glycero-3-phosphate + CoA. It catalyses the reaction a fatty acyl-[ACP] + sn-glycerol 3-phosphate = a 1-acyl-sn-glycero-3-phosphate + holo-[ACP]. It functions in the pathway lipid metabolism; phospholipid metabolism. Functionally, catalyzes the transfer of an acyl group from acyl-ACP to glycerol-3-phosphate (G3P) to form lysophosphatidic acid (LPA). This enzyme can also utilize acyl-CoA as fatty acyl donor, but not acyl-PO(4). The sequence is that of Glycerol-3-phosphate acyltransferase from Escherichia coli O8 (strain IAI1).